The chain runs to 515 residues: Envelope glycoprotein (515 aa).

The N-terminal stretch at 1–33 (MPKERRSRRRPQPIIRWVSLTLTLLALCRPIQT) is a signal peptide. The Extracellular portion of the chain corresponds to 34-435 (WRCSLSLGNQ…LGLTAWVRET (402 aa)). N-linked (GlcNAc...) asparagine; by host glycosylation is found at asparagine 129 and asparagine 203. The CXXC signature appears at 212 to 215 (CAIC). 3 disulfides stabilise this stretch: cysteine 212/cysteine 215, cysteine 212/cysteine 392, and cysteine 384/cysteine 391. N-linked (GlcNAc...) asparagine; by host glycans are attached at residues asparagine 230, asparagine 251, asparagine 256, asparagine 271, and asparagine 287. Residues 304 to 324 (VAALTLGLALSVGLTGINVAV) form a fusion peptide region. 2 coiled-coil regions span residues 330-376 (QRLT…WLYI) and 388-420 (NEPC…DWQW). Asparagine 351 carries an N-linked (GlcNAc...) asparagine; by host glycan. Residues 365-381 (AQNRRGLDWLYIRLGFQ) are immunosuppression. Residues 384–392 (CPTINEPCC) carry the CX6CC motif. The N-linked (GlcNAc...) asparagine; by host glycan is linked to asparagine 398. A helical transmembrane segment spans residues 436–456 (IHSVLSLFLLALFLLFLAPCL). Cysteine 455 carries the S-palmitoyl cysteine; by host lipid modification. The Cytoplasmic segment spans residues 457–515 (IKCLTSRLLKLLRQAPHFPEISLTPKPDSDYQALLPSAPEIYSHLSPVKPDYINLRPCP).

The mature envelope protein (Env) consists of a trimer of SU-TM heterodimers attached by a labile interchain disulfide bond. In terms of processing, specific enzymatic cleavages in vivo yield mature proteins. Envelope glycoproteins are synthesized as an inactive precursor that is N-glycosylated and processed likely by host cell furin or by a furin-like protease in the Golgi to yield the mature SU and TM proteins. The cleavage site between SU and TM requires the minimal sequence [KR]-X-[KR]-R. The CXXC motif is highly conserved across a broad range of retroviral envelope proteins. It is thought to participate in the formation of a labile disulfide bond possibly with the CX6CC motif present in the transmembrane protein. Isomerization of the intersubunit disulfide bond to an SU intrachain disulfide bond is thought to occur upon receptor recognition in order to allow membrane fusion. Post-translationally, the transmembrane protein is palmitoylated.

It localises to the virion membrane. The protein localises to the host cell membrane. The surface protein (SU) attaches the virus to the host cell by binding to its receptor. This interaction triggers the refolding of the transmembrane protein (TM) and is thought to activate its fusogenic potential by unmasking its fusion peptide. Fusion occurs at the host cell plasma membrane. In terms of biological role, the transmembrane protein (TM) acts as a class I viral fusion protein. Under the current model, the protein has at least 3 conformational states: pre-fusion native state, pre-hairpin intermediate state, and post-fusion hairpin state. During viral and target cell membrane fusion, the coiled coil regions (heptad repeats) assume a trimer-of-hairpins structure, positioning the fusion peptide in close proximity to the C-terminal region of the ectodomain. The formation of this structure appears to drive apposition and subsequent fusion of viral and target cell membranes. Membranes fusion leads to delivery of the nucleocapsid into the cytoplasm. The polypeptide is Envelope glycoprotein (env) (Bos taurus (Bovine)).